We begin with the raw amino-acid sequence, 201 residues long: Regulator of G-protein signaling rgs-1 (201 aa).

Residues 37 to 156 enclose the RGS domain; sequence SWQQSFDTLM…FLTSIFYRET (120 aa). The segment at 168 to 201 is disordered; that stretch reads GGDEEKEREQRAERARLNVPATAAEGSSKDISMV. The segment covering 170-183 has biased composition (basic and acidic residues); sequence DEEKEREQRAERAR.

In terms of tissue distribution, expressed in most or all neurons.

Inhibits G protein signaling in nervous system, interacting preferentially with the G(O) subfamily member goa-1. In vitro, protein acts as a GTPase activator of goa-1. Rgs-1 and rgs-2 redundantly adjust signaling when worms are fed to allow rapid induction of egg-laying behavior. The polypeptide is Regulator of G-protein signaling rgs-1 (rgs-1) (Caenorhabditis elegans).